We begin with the raw amino-acid sequence, 55 residues long: UPF0391 membrane protein RSp1666 (55 aa).

Helical transmembrane passes span Ala5 to Ala25 and Ile33 to Gly53.

The protein belongs to the UPF0391 family.

It is found in the cell membrane. In Ralstonia nicotianae (strain ATCC BAA-1114 / GMI1000) (Ralstonia solanacearum), this protein is UPF0391 membrane protein RSp1666.